We begin with the raw amino-acid sequence, 489 residues long: Probable cytosol aminopeptidase (489 aa).

2 residues coordinate Mn(2+): Lys-255 and Asp-260. Lys-267 is an active-site residue. Residues Asp-279, Asp-339, and Glu-341 each contribute to the Mn(2+) site. Arg-343 is an active-site residue.

It belongs to the peptidase M17 family. The cofactor is Mn(2+).

Its subcellular location is the cytoplasm. It catalyses the reaction Release of an N-terminal amino acid, Xaa-|-Yaa-, in which Xaa is preferably Leu, but may be other amino acids including Pro although not Arg or Lys, and Yaa may be Pro. Amino acid amides and methyl esters are also readily hydrolyzed, but rates on arylamides are exceedingly low.. The catalysed reaction is Release of an N-terminal amino acid, preferentially leucine, but not glutamic or aspartic acids.. Functionally, presumably involved in the processing and regular turnover of intracellular proteins. Catalyzes the removal of unsubstituted N-terminal amino acids from various peptides. In Synechococcus sp. (strain CC9605), this protein is Probable cytosol aminopeptidase.